A 257-amino-acid chain; its full sequence is Deoxyribose-phosphate aldolase (257 aa).

The active-site Proton donor/acceptor is Asp-102. Lys-166 acts as the Schiff-base intermediate with acetaldehyde in catalysis. The Proton donor/acceptor role is filled by Lys-198.

This sequence belongs to the DeoC/FbaB aldolase family. DeoC type 2 subfamily.

The protein resides in the cytoplasm. It catalyses the reaction 2-deoxy-D-ribose 5-phosphate = D-glyceraldehyde 3-phosphate + acetaldehyde. It participates in carbohydrate degradation; 2-deoxy-D-ribose 1-phosphate degradation; D-glyceraldehyde 3-phosphate and acetaldehyde from 2-deoxy-alpha-D-ribose 1-phosphate: step 2/2. Its function is as follows. Catalyzes a reversible aldol reaction between acetaldehyde and D-glyceraldehyde 3-phosphate to generate 2-deoxy-D-ribose 5-phosphate. The polypeptide is Deoxyribose-phosphate aldolase (Aeromonas salmonicida (strain A449)).